We begin with the raw amino-acid sequence, 790 residues long: Cadherin-6 (790 aa).

The N-terminal stretch at 1 to 18 (MRTYRYFLLLFWVGQPYP) is a signal peptide. Positions 19 to 53 (TFSTPLSKRTSGFPAKKRTLELSGNSKNELSRSKR) are excised as a propeptide. Cadherin domains follow at residues 54–159 (SWMW…EPIF), 160–268 (TKEV…PPRF), 269–383 (PQST…PPVF), 384–486 (SKLA…DNPP), and 487–608 (EFAE…LVHP). The Extracellular segment spans residues 54-615 (SWMWNQFFLL…VHPTGLSTGA (562 aa)). A glycan (N-linked (GlcNAc...) asparagine) is linked at Asn255. The tract at residues 261–291 (VNDNPPRFPQSTYQFKTPESSPPGTPIGRIK) is disordered. Over residues 269 to 279 (PQSTYQFKTPE) the composition is skewed to polar residues. Residues Asn399, Asn437, Asn455, and Asn536 are each glycosylated (N-linked (GlcNAc...) asparagine). A helical membrane pass occupies residues 616–636 (LIAILLCIVTLLVTVVLFAAL). Residues 637 to 790 (RRQRKKEPLI…YGGVDSDKDS (154 aa)) are Cytoplasmic-facing. 2 positions are modified to phosphoserine: Ser786 and Ser790.

The protein localises to the cell membrane. Functionally, cadherins are calcium-dependent cell adhesion proteins. They preferentially interact with themselves in a homophilic manner in connecting cells; cadherins may thus contribute to the sorting of heterogeneous cell types. The polypeptide is Cadherin-6 (CDH6) (Bos taurus (Bovine)).